The chain runs to 362 residues: 3-ketodihydrosphingosine reductase gsl-3 (362 aa).

Residue L55 coordinates NADP(+). Residues G58, S60, G62, and R83 each contribute to the NADPH site. The GXSXG motif lies at 58–62; sequence GASEG. Residue N84 coordinates NADP(+). The NADPH site is built by R87 and D113. The NADP(+) site is built by D113, R176, Y216, K220, I252, and S254. Y216 serves as the catalytic Proton acceptor. The active-site Lowers pKa of active site Tyr is the K220. Residues 318–338 traverse the membrane as a helical segment; that stretch reads NNWVLDTLMGWLIPIIYFFVL.

This sequence belongs to the short-chain dehydrogenases/reductases (SDR) family.

It localises to the endoplasmic reticulum membrane. The enzyme catalyses sphinganine + NADP(+) = 3-oxosphinganine + NADPH + H(+). It functions in the pathway lipid metabolism; sphingolipid metabolism. Functionally, catalyzes the reduction of 3'-oxosphinganine (3-ketodihydrosphingosine/KDS) to sphinganine (dihydrosphingosine/DHS), the second step of de novo sphingolipid biosynthesis. The protein is 3-ketodihydrosphingosine reductase gsl-3 (gsl-3) of Neurospora crassa (strain ATCC 24698 / 74-OR23-1A / CBS 708.71 / DSM 1257 / FGSC 987).